We begin with the raw amino-acid sequence, 82 residues long: MDSITTAASVVAAGLAVGLGAIGPGIGQGTAAGGAVEGIARQPEAEGKIRGTLLLSFAFMESLTIYGLVVALVLLFANPFAG.

The next 2 membrane-spanning stretches (helical) occupy residues 7 to 27 (AASV…PGIG) and 57 to 77 (FAFM…LLFA).

The protein belongs to the ATPase C chain family. As to quaternary structure, F-type ATPases have 2 components, F(1) - the catalytic core - and F(0) - the membrane proton channel. F(1) has five subunits: alpha(3), beta(3), gamma(1), delta(1), epsilon(1). F(0) has four main subunits: a(1), b(1), b'(1) and c(10-14). The alpha and beta chains form an alternating ring which encloses part of the gamma chain. F(1) is attached to F(0) by a central stalk formed by the gamma and epsilon chains, while a peripheral stalk is formed by the delta, b and b' chains.

The protein localises to the cellular thylakoid membrane. Its function is as follows. F(1)F(0) ATP synthase produces ATP from ADP in the presence of a proton or sodium gradient. F-type ATPases consist of two structural domains, F(1) containing the extramembraneous catalytic core and F(0) containing the membrane proton channel, linked together by a central stalk and a peripheral stalk. During catalysis, ATP synthesis in the catalytic domain of F(1) is coupled via a rotary mechanism of the central stalk subunits to proton translocation. Functionally, key component of the F(0) channel; it plays a direct role in translocation across the membrane. A homomeric c-ring of between 10-14 subunits forms the central stalk rotor element with the F(1) delta and epsilon subunits. The sequence is that of ATP synthase subunit c from Prochlorococcus marinus (strain MIT 9303).